The sequence spans 521 residues: Zinc finger protein GLIS2 (521 aa).

Residues 35 to 174 (ALHRELGLVD…AKQLVCRWAK (140 aa)) are interaction with CTNND1. Disordered stretches follow at residues 41–63 (GLVD…LLNP) and 84–110 (SPPS…DLPP). A compositionally biased stretch (pro residues) spans 49–58 (PGSPGSPPPG). Residues 71-137 (GRFSAAPLVD…SSFQFFLPLG (67 aa)) are transcription activation. Residues 84–100 (SPPSGLDSPNGSSSLSP) are compositionally biased toward low complexity. Positions 148–171 (SFLPPPKDKCLSPELPLAKQLVCR) are transcription repression. The C2H2-type 1 zinc-finger motif lies at 168 to 193 (LVCRWAKCNQLFELLQDLVDHVNDHH). A C2H2-type 2; atypical zinc finger spans residues 202–229 (YCCHWEGCARHGRGFNARYKMLIHIRTH). 3 consecutive C2H2-type zinc fingers follow at residues 235 to 257 (HRCP…NRSH), 263 to 287 (YVCP…TRTH), and 293 to 317 (YYCK…IKAH). The tract at residues 436 to 501 (AGSKAEGEKG…NSAASSPEVL (66 aa)) is disordered. Positions 455 to 470 (GLEDHKTPLERTERSR) are enriched in basic and acidic residues. The segment covering 487–496 (DLSTGNSAAS) has biased composition (polar residues).

Belongs to the GLI C2H2-type zinc-finger protein family. Interacts with CTBP1 and HDAC3. Interacts with CTNNB1 and CTNND1. Interacts with SUFU. In terms of processing, C-terminus cleavage is induced by interaction with CTNND1 and enhances by Src tyrosine kinase. In terms of tissue distribution, expressed at high levels in kidney, and at lower levels in heart and lung.

Its subcellular location is the nucleus speckle. It is found in the cytoplasm. Its function is as follows. Can act either as a transcriptional repressor or as a transcriptional activator, depending on the cell context. Acts as a repressor of the Hedgehog signaling pathway. Represses the Hedgehog-dependent expression of Wnt4. Necessary to maintain the differentiated epithelial phenotype in renal cells through the inhibition of SNAI1, which itself induces the epithelial-to-mesenchymal transition. Represses transcriptional activation by CTNNB1 in the Wnt signaling pathway. May act by recruiting the corepressors CTBP1 and HDAC3. May be involved in neuron differentiation. The polypeptide is Zinc finger protein GLIS2 (Glis2) (Mus musculus (Mouse)).